The chain runs to 133 residues: Small ribosomal subunit protein eS8 (133 aa).

The segment at 1–22 (MGFYQGPDNRKITGGLKGKHRD) is disordered.

Belongs to the eukaryotic ribosomal protein eS8 family. As to quaternary structure, part of the 30S ribosomal subunit.

In Saccharolobus islandicus (strain M.14.25 / Kamchatka #1) (Sulfolobus islandicus), this protein is Small ribosomal subunit protein eS8.